Consider the following 79-residue polypeptide: MPRRVLQGQVISAKSDKTIIVSVERRFKHPMYHKTVKIAKKYAVHDPDNLYNQGDKVKIIESRPISKTKCWRVIEDKGQ.

The protein belongs to the universal ribosomal protein uS17 family. Part of the 30S ribosomal subunit.

One of the primary rRNA binding proteins, it binds specifically to the 5'-end of 16S ribosomal RNA. This is Small ribosomal subunit protein uS17 from Orientia tsutsugamushi (strain Boryong) (Rickettsia tsutsugamushi).